We begin with the raw amino-acid sequence, 465 residues long: Antithrombin-III (465 aa).

Positions 1–32 (MISNGIGTVTTGKRSMCLFPLLLIGLWGCVTC) are cleaved as a signal peptide. Intrachain disulfides connect Cys41–Cys161 and Cys54–Cys128. At Thr64 the chain carries Phosphothreonine. The residue at position 69 (Ser69) is a Phosphoserine. Trp82 contacts heparin. Asn129 carries N-linked (GlcNAc...) asparagine glycosylation. Arg162 provides a ligand contact to heparin. The N-linked (GlcNAc...) asparagine glycan is linked to Asn168. Residue Arg178 coordinates heparin. N-linked (GlcNAc...) asparagine glycans are attached at residues Asn188 and Asn225. A disulfide bond links Cys280 and Cys463.

It belongs to the serpin family. In terms of assembly, forms protease inhibiting heterodimer with TMPRSS7. Phosphorylated by FAM20C in the extracellular medium. As to expression, plasma.

The protein resides in the secreted. It is found in the extracellular space. Most important serine protease inhibitor in plasma that regulates the blood coagulation cascade. AT-III inhibits thrombin, matriptase-3/TMPRSS7, as well as factors IXa, Xa and XIa. Its inhibitory activity is greatly enhanced in the presence of heparin. This chain is Antithrombin-III (SERPINC1), found in Ovis aries (Sheep).